We begin with the raw amino-acid sequence, 958 residues long: Probable transport protein MmpL1 (958 aa).

Transmembrane regions (helical) follow at residues 19–39 (ALSL…NVVA), 192–212 (SLHT…FIAY), 216–236 (SAAL…RGII), 252–272 (VNVL…FLVG), 295–315 (TAHV…CLGF), 329–349 (AIGL…IIAV), 377–397 (WPGP…LALP), 762–782 (YDVM…MLGI), 791–811 (VIVG…VLIW), 814–834 (ILHM…MLAV), 868–888 (VVTI…ASDL), and 906–927 (TLVV…WFWW).

Belongs to the resistance-nodulation-cell division (RND) (TC 2.A.6) family. MmpL subfamily.

The protein localises to the cell membrane. This chain is Probable transport protein MmpL1 (mmpL1), found in Mycobacterium tuberculosis (strain CDC 1551 / Oshkosh).